A 182-amino-acid polypeptide reads, in one-letter code: Biotin carboxyl carrier protein of acetyl-CoA carboxylase (182 aa).

The interval 70 to 95 (AAPSPSPEPGTSRAADHAVTSSGSQP) is disordered. A Biotinyl-binding domain is found at 104–180 (LAEVASPMVG…EYNQPLMRIK (77 aa)). Lys146 bears the N6-biotinyllysine mark.

Homodimer.

It functions in the pathway lipid metabolism; fatty acid biosynthesis. Its function is as follows. This protein is a component of the acetyl coenzyme A carboxylase complex; first, biotin carboxylase catalyzes the carboxylation of the carrier protein and then the transcarboxylase transfers the carboxyl group to form malonyl-CoA. The protein is Biotin carboxyl carrier protein of acetyl-CoA carboxylase (accB) of Nostoc sp. (strain PCC 7120 / SAG 25.82 / UTEX 2576).